Consider the following 321-residue polypeptide: Glucokinase (321 aa).

8–13 (GDVGGT) contacts ATP.

The protein belongs to the bacterial glucokinase family.

The protein localises to the cytoplasm. It carries out the reaction D-glucose + ATP = D-glucose 6-phosphate + ADP + H(+). In Citrobacter koseri (strain ATCC BAA-895 / CDC 4225-83 / SGSC4696), this protein is Glucokinase.